Consider the following 468-residue polypeptide: 3-isopropylmalate dehydratase large subunit (468 aa).

Positions 346, 406, and 409 each coordinate [4Fe-4S] cluster.

This sequence belongs to the aconitase/IPM isomerase family. LeuC type 1 subfamily. Heterodimer of LeuC and LeuD. The cofactor is [4Fe-4S] cluster.

The catalysed reaction is (2R,3S)-3-isopropylmalate = (2S)-2-isopropylmalate. It functions in the pathway amino-acid biosynthesis; L-leucine biosynthesis; L-leucine from 3-methyl-2-oxobutanoate: step 2/4. Catalyzes the isomerization between 2-isopropylmalate and 3-isopropylmalate, via the formation of 2-isopropylmaleate. The protein is 3-isopropylmalate dehydratase large subunit of Pseudoalteromonas atlantica (strain T6c / ATCC BAA-1087).